We begin with the raw amino-acid sequence, 60 residues long: Small ribosomal subunit protein bS21 (60 aa).

The interval 35–60 is disordered; that stretch reads REHYEKPSVKRKKKSEAARRRKSKVR. The segment covering 43 to 60 has biased composition (basic residues); that stretch reads VKRKKKSEAARRRKSKVR.

It belongs to the bacterial ribosomal protein bS21 family.

In Clostridium novyi (strain NT), this protein is Small ribosomal subunit protein bS21.